We begin with the raw amino-acid sequence, 182 residues long: ADP-ribosylation factor 1 (182 aa).

Residue glycine 2 is the site of N-myristoyl glycine attachment. Residues 3–16 (NVFANLFKGLFGKK) form an important for the stable binding to the membranes region. GTP contacts are provided by residues 24-32 (GLDAAGKTT), 126-129 (NKQD), and alanine 160.

It belongs to the small GTPase superfamily. Arf family.

The protein resides in the golgi apparatus membrane. The protein localises to the cytoplasm. Its subcellular location is the cytosol. The enzyme catalyses GTP + H2O = GDP + phosphate + H(+). Alternates between an inactive GDP-bound form and an active GTP-bound form. Activated by a guanine nucleotide-exchange factor (GEF) and inactivated by GTPase-activating protein (GAP). In terms of biological role, small GTPase involved in protein trafficking between different compartments. Modulates vesicle budding and uncoating within the Golgi complex. In its GTP-bound form, triggers the recruitment of coatomer proteins to the Golgi membrane. The hydrolysis of ARF1-bound GTP, which is mediated by ARFGAPs proteins, is required for dissociation of coat proteins from Golgi membranes and vesicles. Has a role in eye development. Required for cleavage furrow ingression in embryonic cells. The chain is ADP-ribosylation factor 1 from Drosophila melanogaster (Fruit fly).